The following is a 286-amino-acid chain: Dioxygenase trt7 (286 aa).

Residues H129, D131, and H206 each contribute to the Fe cation site.

This sequence belongs to the PhyH family. In terms of assembly, homodimer. It depends on Fe cation as a cofactor.

The protein operates within secondary metabolite biosynthesis; terpenoid biosynthesis. Functionally, dioxygenase; part of the gene cluster that mediates the biosynthesis of terretonin, a fungal meroterpenoid that acts as a mycotoxin. The first step of the pathway is the synthesis of 3,5-dimethylorsellinic acid (DMOA) by the polyketide synthase trt4. DMOA is then prenylated into farnesyl-DMOA by the polyprenyl transferase trt2. Methylation by the methyltransferase trt5 then leads to farnesyl-DMOA methyl ester which is further subject to epoxidation by the FAD-dependent monooxygenase trt8 to yield epoxyfarnesyl-DMOA methyl ester. Cyclization of epoxyfarnesyl-DMOA methyl ester by the terpene cyclase trt1 leads to a tetracycle intermediate which is in turn converted to preterretonin. Dehydrogenase trt9 comes next to transform preterretonin to preterrenoid. The FAD-dependent monooxygenase trt3 is then required for the C-hydroxylation at C16 of preterrenoid to yield terrenoid. The cytochrome P450 trt6 catalyzes three successive oxidations to transform terrenoid into an unstable intermediate, which then undergoes the D-ring expansion and unusual rearrangement of the methoxy group to afford the core skeleton of terretonin. Trt14 catalyzes the D-ring expansion of terretonin involving intramolecular methoxy rearrangement as well as the hydrolysis of the expanded D-ring and the methyl ester moiety. Finally, the nonheme iron-dependent dioxygenase trt7 accomplishes the last two oxidation reactions steps to complete the biosynthesis of terretonin. Terretonin C is produced via spontaneous decarboxylation of the terretonin precursor. Another shunt product of the terretonin biosynthesis is dihydrofarnesyl-DMOA, derived from epoxyfarnesyl-DMOA through hydrolysis of the epoxide. This chain is Dioxygenase trt7, found in Aspergillus terreus (strain NIH 2624 / FGSC A1156).